Here is a 586-residue protein sequence, read N- to C-terminus: Cytosolic Fe-S cluster assembly factor NAR1 (586 aa).

Positions 20, 73, 76, 79, 220, 275, 462, and 466 each coordinate [4Fe-4S] cluster.

It belongs to the NARF family.

Functionally, component of the cytosolic Fe/S protein assembly machinery. Required for maturation of extramitochondrial Fe/S proteins. May play a role in the transfer of pre-assembled Fe/S clusters to target apoproteins. This Chaetomium globosum (strain ATCC 6205 / CBS 148.51 / DSM 1962 / NBRC 6347 / NRRL 1970) (Soil fungus) protein is Cytosolic Fe-S cluster assembly factor NAR1 (NAR1).